The primary structure comprises 103 residues: Small ribosomal subunit protein uS10 (103 aa).

It belongs to the universal ribosomal protein uS10 family. In terms of assembly, part of the 30S ribosomal subunit.

Its function is as follows. Involved in the binding of tRNA to the ribosomes. This chain is Small ribosomal subunit protein uS10, found in Ruminiclostridium cellulolyticum (strain ATCC 35319 / DSM 5812 / JCM 6584 / H10) (Clostridium cellulolyticum).